We begin with the raw amino-acid sequence, 81 residues long: Sulfur carrier protein TusA (81 aa).

The active-site Cysteine persulfide intermediate is C19.

It belongs to the sulfur carrier protein TusA family. In terms of assembly, interacts with IscS.

Its subcellular location is the cytoplasm. It functions in the pathway tRNA modification. Its function is as follows. Sulfur carrier protein involved in sulfur trafficking in the cell. Part of a sulfur-relay system required for 2-thiolation during synthesis of 2-thiouridine of the modified wobble base 5-methylaminomethyl-2-thiouridine (mnm(5)s(2)U) in tRNA. Interacts with IscS and stimulates its cysteine desulfurase activity. Accepts an activated sulfur from IscS, which is then transferred to TusD, and thus determines the direction of sulfur flow from IscS to 2-thiouridine formation. Also appears to be involved in sulfur transfer for the biosynthesis of molybdopterin. This is Sulfur carrier protein TusA from Salmonella choleraesuis (strain SC-B67).